The sequence spans 396 residues: Acetate kinase (396 aa).

Asn-7 is a binding site for Mg(2+). Lys-14 contacts ATP. Arg-89 is a substrate binding site. Asp-146 acts as the Proton donor/acceptor in catalysis. ATP contacts are provided by residues 206–210 (HLGNG), 280–282 (DLR), and 328–332 (GIGEN). Glu-382 contributes to the Mg(2+) binding site.

This sequence belongs to the acetokinase family. Homodimer. Mg(2+) is required as a cofactor. It depends on Mn(2+) as a cofactor.

It is found in the cytoplasm. It catalyses the reaction acetate + ATP = acetyl phosphate + ADP. The protein operates within metabolic intermediate biosynthesis; acetyl-CoA biosynthesis; acetyl-CoA from acetate: step 1/2. Catalyzes the formation of acetyl phosphate from acetate and ATP. Can also catalyze the reverse reaction. This chain is Acetate kinase, found in Maridesulfovibrio salexigens (strain ATCC 14822 / DSM 2638 / NCIMB 8403 / VKM B-1763) (Desulfovibrio salexigens).